A 394-amino-acid polypeptide reads, in one-letter code: Isopentenyl-diphosphate delta-isomerase (394 aa).

10–11 (RK) contacts substrate. Residues Thr67, 68–70 (GMT), Ser101, and Asn129 contribute to the FMN site. 101 to 103 (SQR) lines the substrate pocket. Substrate is bound at residue Gln168. Glu169 lines the Mg(2+) pocket. FMN contacts are provided by residues Lys200, Ser225, Thr230, 279-281 (GMR), and 300-301 (AL).

This sequence belongs to the IPP isomerase type 2 family. In terms of assembly, homooctamer. Dimer of tetramers. The cofactor is FMN. NADPH serves as cofactor. Requires Mg(2+) as cofactor.

The protein localises to the cytoplasm. It carries out the reaction isopentenyl diphosphate = dimethylallyl diphosphate. Functionally, involved in the biosynthesis of isoprenoids. Catalyzes the 1,3-allylic rearrangement of the homoallylic substrate isopentenyl (IPP) to its allylic isomer, dimethylallyl diphosphate (DMAPP). This is Isopentenyl-diphosphate delta-isomerase from Pyrococcus furiosus (strain ATCC 43587 / DSM 3638 / JCM 8422 / Vc1).